The sequence spans 697 residues: Elongation factor G 2 (697 aa).

The tr-type G domain occupies 5–280; the sequence is SKYRNIGIFA…AVVDYLPDPV (276 aa). GTP-binding positions include 14 to 21, 78 to 82, and 132 to 135; these read AHVDAGKT, DTPGH, and NKLD.

Belongs to the TRAFAC class translation factor GTPase superfamily. Classic translation factor GTPase family. EF-G/EF-2 subfamily.

It is found in the cytoplasm. Functionally, catalyzes the GTP-dependent ribosomal translocation step during translation elongation. During this step, the ribosome changes from the pre-translocational (PRE) to the post-translocational (POST) state as the newly formed A-site-bound peptidyl-tRNA and P-site-bound deacylated tRNA move to the P and E sites, respectively. Catalyzes the coordinated movement of the two tRNA molecules, the mRNA and conformational changes in the ribosome. The chain is Elongation factor G 2 from Shewanella frigidimarina (strain NCIMB 400).